The chain runs to 390 residues: 3-ketoacyl-CoA thiolase (390 aa).

The active-site Acyl-thioester intermediate is the C95. Catalysis depends on proton acceptor residues H346 and C376.

The protein belongs to the thiolase-like superfamily. Thiolase family. As to quaternary structure, heterotetramer of two alpha chains (FadB) and two beta chains (FadA).

The protein resides in the cytoplasm. The enzyme catalyses an acyl-CoA + acetyl-CoA = a 3-oxoacyl-CoA + CoA. It functions in the pathway lipid metabolism; fatty acid beta-oxidation. Functionally, catalyzes the final step of fatty acid oxidation in which acetyl-CoA is released and the CoA ester of a fatty acid two carbons shorter is formed. The protein is 3-ketoacyl-CoA thiolase of Psychrobacter arcticus (strain DSM 17307 / VKM B-2377 / 273-4).